The primary structure comprises 695 residues: Threonine--tRNA ligase (695 aa).

The TGS domain maps to 6-75 (SAIFVNTTDT…ETTATFTAVP (70 aa)). Residues 274-580 (DHRRLGTELD…LLEHYAGAFP (307 aa)) are catalytic. Positions 379, 430, and 557 each coordinate Zn(2+).

This sequence belongs to the class-II aminoacyl-tRNA synthetase family. As to quaternary structure, homodimer. Zn(2+) serves as cofactor.

The protein localises to the cytoplasm. The catalysed reaction is tRNA(Thr) + L-threonine + ATP = L-threonyl-tRNA(Thr) + AMP + diphosphate + H(+). Catalyzes the attachment of threonine to tRNA(Thr) in a two-step reaction: L-threonine is first activated by ATP to form Thr-AMP and then transferred to the acceptor end of tRNA(Thr). Also edits incorrectly charged L-seryl-tRNA(Thr). The sequence is that of Threonine--tRNA ligase from Corynebacterium glutamicum (strain ATCC 13032 / DSM 20300 / JCM 1318 / BCRC 11384 / CCUG 27702 / LMG 3730 / NBRC 12168 / NCIMB 10025 / NRRL B-2784 / 534).